Consider the following 844-residue polypeptide: Prickle-like protein 2 (844 aa).

The region spanning 18–126 (FDFQRNSTSD…NVRPFPVTMT (109 aa)) is the PET domain. A Phosphoserine modification is found at serine 92. LIM zinc-binding domains are found at residues 128 to 193 (AICE…CLKP), 193 to 253 (PRCA…LYAE), and 253 to 317 (EYCD…EDPN). 2 disordered regions span residues 314-350 (EDPN…TEEP) and 481-519 (ESYS…QQCR). The segment covering 318–327 (GSDSSDSAFQ) has biased composition (polar residues). Phosphoserine occurs at positions 319, 321, and 322. Residues 481-493 (ESYSDMSSQSFSE) show a composition bias toward low complexity. Phosphothreonine occurs at positions 534, 536, and 539. 4 positions are modified to phosphoserine: serine 543, serine 546, serine 607, and serine 642. The disordered stretch occupies residues 639 to 709 (MHQSFDFDGG…HLASEREAIS (71 aa)). The segment covering 682–692 (FRPHRSRRSRR) has biased composition (basic residues). Residues 693–709 (SRSDNALHLASEREAIS) show a composition bias toward basic and acidic residues. The residue at position 731 (serine 731) is a Phosphoserine. The disordered stretch occupies residues 822 to 844 (STLGGRGQLHSRKRQKSKNCIIS). At cysteine 841 the chain carries Cysteine methyl ester. Residue cysteine 841 is the site of S-farnesyl cysteine attachment. A propeptide spans 842 to 844 (IIS) (removed in mature form).

The protein belongs to the prickle / espinas / testin family. Expressed in brain, eye and testis. Additionally in fetal brain, adult cartilage, pancreatic islet, gastric cancer and uterus tumors.

The protein localises to the nucleus membrane. The chain is Prickle-like protein 2 (PRICKLE2) from Homo sapiens (Human).